Consider the following 184-residue polypeptide: Putative YfeABCD regulator YfeE (184 aa).

3 consecutive transmembrane segments (helical) span residues 15–35, 84–104, and 162–182; these read IAGW…IINF, LSAG…GLSL, and ILPS…GIMI.

It to E.coli YniB.

It is found in the cell membrane. Functionally, putative regulator of YfeABCD, an ABC transporter locus involved in inorganic iron transport. The sequence is that of Putative YfeABCD regulator YfeE (yfeE) from Yersinia pestis.